Reading from the N-terminus, the 473-residue chain is Putative malate dehydrogenase 1B (473 aa).

It belongs to the LDH/MDH superfamily. MDH type 2 family.

This chain is Putative malate dehydrogenase 1B (MDH1B), found in Bos taurus (Bovine).